A 638-amino-acid chain; its full sequence is tRNA uridine 5-carboxymethylaminomethyl modification enzyme MnmG (638 aa).

FAD is bound by residues 13–18 (GGGHAG), Val-125, and Ser-180. 273–287 (GPRYCPSIEDKIHRF) lines the NAD(+) pocket. Gln-370 contacts FAD.

It belongs to the MnmG family. As to quaternary structure, homodimer. Heterotetramer of two MnmE and two MnmG subunits. FAD serves as cofactor.

The protein resides in the cytoplasm. In terms of biological role, NAD-binding protein involved in the addition of a carboxymethylaminomethyl (cmnm) group at the wobble position (U34) of certain tRNAs, forming tRNA-cmnm(5)s(2)U34. The sequence is that of tRNA uridine 5-carboxymethylaminomethyl modification enzyme MnmG from Cellvibrio japonicus (strain Ueda107) (Pseudomonas fluorescens subsp. cellulosa).